The primary structure comprises 561 residues: MLLEQQKQLISLIQAAVAQCLPEAQAQVQLERPKVAAHGDIATNVAMQLAKPARRNPRELAQGIVDALMAQPQARELIQDAEIAGPGFINFRLTPAARQAVVQAVASQADAYGRAPRNGEKVLVEFVSANPTGPLHVGHARQAALGDAICRLYDASGWDVTREFYYNDAGNQIDNLAISVQARGRGIAPDAPDYPTDGYKGDYIVEIARDFAARKSVQASDGQPVTATGDLDSLDDIRAFAVAYLRREQDLDLQAFGLAFDNYFLESSLYASGRVQETVDTLVAKGHTYEEGGALWLRTTELGTGDDKDRVMRKSEGGYTYFVPDVAYHKVKWERGFHHAVNIQGSDHHGTVARVRAGLQGLEAGIPKDFPAYVLHKMVKVMRGGEEVKISKRAGSYVTMRDLIDWVGRDAVRYFLIQRRADTEFVFDIDLALSKSDENPVYYIQYAHARICTMIGNSGASAAEIAQADTALLTAPSEYALLQRLAEFPQVVALAAQELAPHHVAFWLRDCASDFHAWYNAERVLVDEPALKLARLRLAATTRQVLANGLALLGVSAPDRM.

The short motif at A129–H139 is the 'HIGH' region element.

It belongs to the class-I aminoacyl-tRNA synthetase family. Monomer.

It is found in the cytoplasm. It carries out the reaction tRNA(Arg) + L-arginine + ATP = L-arginyl-tRNA(Arg) + AMP + diphosphate. The sequence is that of Arginine--tRNA ligase from Bordetella parapertussis (strain 12822 / ATCC BAA-587 / NCTC 13253).